Here is a 211-residue protein sequence, read N- to C-terminus: Thymidylate kinase (211 aa).

11 to 18 (GPDGAGKT) is a binding site for ATP.

Belongs to the thymidylate kinase family.

The enzyme catalyses dTMP + ATP = dTDP + ADP. Its function is as follows. Phosphorylation of dTMP to form dTDP in both de novo and salvage pathways of dTTP synthesis. The polypeptide is Thymidylate kinase (Streptococcus equi subsp. equi (strain 4047)).